Here is a 299-residue protein sequence, read N- to C-terminus: Phosphatidylserine decarboxylase proenzyme (299 aa).

Active-site charge relay system; for autoendoproteolytic cleavage activity residues include aspartate 115, histidine 171, and serine 258. The active-site Schiff-base intermediate with substrate; via pyruvic acid; for decarboxylase activity is serine 258. A Pyruvic acid (Ser); by autocatalysis modification is found at serine 258.

The protein belongs to the phosphatidylserine decarboxylase family. PSD-B subfamily. Prokaryotic type II sub-subfamily. Heterodimer of a large membrane-associated beta subunit and a small pyruvoyl-containing alpha subunit. Requires pyruvate as cofactor. In terms of processing, is synthesized initially as an inactive proenzyme. Formation of the active enzyme involves a self-maturation process in which the active site pyruvoyl group is generated from an internal serine residue via an autocatalytic post-translational modification. Two non-identical subunits are generated from the proenzyme in this reaction, and the pyruvate is formed at the N-terminus of the alpha chain, which is derived from the carboxyl end of the proenzyme. The autoendoproteolytic cleavage occurs by a canonical serine protease mechanism, in which the side chain hydroxyl group of the serine supplies its oxygen atom to form the C-terminus of the beta chain, while the remainder of the serine residue undergoes an oxidative deamination to produce ammonia and the pyruvoyl prosthetic group on the alpha chain. During this reaction, the Ser that is part of the protease active site of the proenzyme becomes the pyruvoyl prosthetic group, which constitutes an essential element of the active site of the mature decarboxylase.

The protein resides in the cell membrane. It carries out the reaction a 1,2-diacyl-sn-glycero-3-phospho-L-serine + H(+) = a 1,2-diacyl-sn-glycero-3-phosphoethanolamine + CO2. It participates in phospholipid metabolism; phosphatidylethanolamine biosynthesis; phosphatidylethanolamine from CDP-diacylglycerol: step 2/2. In terms of biological role, catalyzes the formation of phosphatidylethanolamine (PtdEtn) from phosphatidylserine (PtdSer). The sequence is that of Phosphatidylserine decarboxylase proenzyme from Chlamydia felis (strain Fe/C-56) (Chlamydophila felis).